The chain runs to 674 residues: Protein kinase C delta type (674 aa).

Residues 1 to 106 (MAPFLRISFN…KNNGKAEFWL (106 aa)) enclose the C2 domain. Threonine 43 and threonine 50 each carry phosphothreonine. Position 64 is a phosphotyrosine (tyrosine 64). Phosphoserine is present on serine 130. The residue at position 141 (threonine 141) is a Phosphothreonine. Tyrosine 155 carries the phosphotyrosine modification. The Phorbol-ester/DAG-type 1 zinc finger occupies 158-208 (NHEFIATFFGQPTFCSVCKEFVWGLNKQGYKCRQCNAAIHKKCIDKIIGRC). Threonine 218 is subject to Phosphothreonine. The segment at 230–280 (PHRFKVYNYMSPTFCDHCGSLLWGLVKQGLKCEDCGMNVHHKCREKVANLC) adopts a Phorbol-ester/DAG-type 2 zinc-finger fold. Phosphoserine; by autocatalysis is present on serine 299. Phosphotyrosine; by SRC is present on residues tyrosine 311 and tyrosine 332. Residues 347 to 601 (FTFQKVLGKG…TGNIRIHPFF (255 aa)) form the Protein kinase domain. 353–361 (LGKGSFGKV) contacts ATP. Tyrosine 372 bears the Phosphotyrosine mark. Lysine 376 contacts ATP. Threonine 449 is modified (phosphothreonine). Aspartate 471 acts as the Proton acceptor in catalysis. At serine 504 the chain carries Phosphoserine. At threonine 505 the chain carries Phosphothreonine; by autocatalysis. A Phosphotyrosine modification is found at tyrosine 565. Residues 602–673 (KTINWSLLEK…VNPKFEQFLD (72 aa)) enclose the AGC-kinase C-terminal domain. 3 positions are modified to phosphoserine: serine 643, serine 652, and serine 662.

This sequence belongs to the protein kinase superfamily. AGC Ser/Thr protein kinase family. PKC subfamily. Interacts with PDPK1 (via N-terminal region). Interacts with RAD9A. Interacts with CDCP1. Interacts with MUC1. Interacts with VASP. Interacts with CAVIN3. Interacts with PRKD2 (via N-terminus and zing-finger domain 1 and 2) in response to oxidative stress; the interaction is independent of PRKD2 tyrosine phosphorylation. Interacts with PLSC3; interaction is enhanced by UV irradiation. Post-translationally, autophosphorylated and/or phosphorylated at Thr-505, within the activation loop; phosphorylation at Thr-505 is not a prerequisite for enzymatic activity. Autophosphorylated at Ser-299. Upon TNFSF10/TRAIL treatment, phosphorylated at Tyr-155; phosphorylation is required for its translocation to the endoplasmic reticulum and cleavage by caspase-3. Phosphorylated at Tyr-311, Tyr-332 and Tyr-565; phosphorylation of Tyr-311 and Tyr-565 following thrombin or zymosan stimulation potentiates its kinase activity. Phosphorylated by protein kinase PDPK1; phosphorylation is inhibited by the apoptotic C-terminal cleavage product of PKN2. Phosphorylated at Tyr-311 through a SYK and SRC mechanism downstream of C-type lectin receptors activation, promoting its activation. In terms of processing, proteolytically cleaved into a catalytic subunit and a regulatory subunit by caspase-3 during apoptosis which results in kinase activation. Isoform 1 is highly expressed in developing pro- and pre-B-cells and moderately in mature T-cells. Isoform 2 is highly expressed in testis and ovary and at a lower level in thymocytes, brain and kidney.

It is found in the cytoplasm. The protein resides in the perinuclear region. Its subcellular location is the nucleus. It localises to the cell membrane. The protein localises to the mitochondrion. It is found in the endomembrane system. It carries out the reaction L-seryl-[protein] + ATP = O-phospho-L-seryl-[protein] + ADP + H(+). It catalyses the reaction L-threonyl-[protein] + ATP = O-phospho-L-threonyl-[protein] + ADP + H(+). The catalysed reaction is L-tyrosyl-[protein] + ATP = O-phospho-L-tyrosyl-[protein] + ADP + H(+). Novel PKCs (PRKCD, PRKCE, PRKCH and PRKCQ) are calcium-insensitive, but activated by diacylglycerol (DAG) and phosphatidylserine. Three specific sites; Thr-505 (activation loop of the kinase domain), Ser-643 (turn motif) and Ser-662 (hydrophobic region), need to be phosphorylated for its full activation. Activated by caspase-3 (CASP3) cleavage during apoptosis. After cleavage, the pseudosubstrate motif in the regulatory subunit is released from the substrate recognition site of the catalytic subunit, which enables PRKCD to become constitutively activated. The catalytic subunit which displays properties of a sphingosine-dependent protein kinase is activated by D-erythro-sphingosine (Sph) or N,N-dimethyl-D-erythrosphingosine (DMS) or N,N,N-trimethyl-D-erythrosphingosine (TMS), but not by ceramide or Sph-1-P and is strongly inhibited by phosphatidylserine. Calcium-independent, phospholipid- and diacylglycerol (DAG)-dependent serine/threonine-protein kinase that plays contrasting roles in cell death and cell survival by functioning as a pro-apoptotic protein during DNA damage-induced apoptosis, but acting as an anti-apoptotic protein during cytokine receptor-initiated cell death, is involved in tumor suppression, is required for oxygen radical production by NADPH oxidase and acts as a positive or negative regulator in platelet functional responses. Negatively regulates B cell proliferation and also has an important function in self-antigen induced B cell tolerance induction. Upon DNA damage, activates the promoter of the death-promoting transcription factor BCLAF1/Btf to trigger BCLAF1-mediated p53/TP53 gene transcription and apoptosis. In response to oxidative stress, interact with and activate CHUK/IKKA in the nucleus, causing the phosphorylation of p53/TP53. In the case of ER stress or DNA damage-induced apoptosis, can form a complex with the tyrosine-protein kinase ABL1 which trigger apoptosis independently of p53/TP53. In cytosol can trigger apoptosis by activating MAPK11 or MAPK14, inhibiting AKT1 and decreasing the level of X-linked inhibitor of apoptosis protein (XIAP), whereas in nucleus induces apoptosis via the activation of MAPK8 or MAPK9. Upon ionizing radiation treatment, is required for the activation of the apoptosis regulators BAX and BAK, which trigger the mitochondrial cell death pathway. Can phosphorylate MCL1 and target it for degradation which is sufficient to trigger for BAX activation and apoptosis. Is required for the control of cell cycle progression both at G1/S and G2/M phases. Mediates phorbol 12-myristate 13-acetate (PMA)-induced inhibition of cell cycle progression at G1/S phase by up-regulating the CDK inhibitor CDKN1A/p21 and inhibiting the cyclin CCNA2 promoter activity. In response to UV irradiation can phosphorylate CDK1, which is important for the G2/M DNA damage checkpoint activation. Can protect glioma cells from the apoptosis induced by TNFSF10/TRAIL, probably by inducing increased phosphorylation and subsequent activation of AKT1. Can also act as tumor suppressor upon mitogenic stimulation with PMA or TPA. In N-formyl-methionyl-leucyl-phenylalanine (fMLP)-treated cells, is required for NCF1 (p47-phox) phosphorylation and activation of NADPH oxidase activity, and regulates TNF-elicited superoxide anion production in neutrophils, by direct phosphorylation and activation of NCF1 or indirectly through MAPK1/3 (ERK1/2) signaling pathways. Involved in antifungal immunity by mediating phosphorylation and activation of CARD9 downstream of C-type lectin receptors activation, promoting interaction between CARD9 and BCL10, followed by activation of NF-kappa-B and MAP kinase p38 pathways. May also play a role in the regulation of NADPH oxidase activity in eosinophil after stimulation with IL5, leukotriene B4 or PMA. In collagen-induced platelet aggregation, acts a negative regulator of filopodia formation and actin polymerization by interacting with and negatively regulating VASP phosphorylation. Downstream of PAR1, PAR4 and CD36/GP4 receptors, regulates differentially platelet dense granule secretion; acts as a positive regulator in PAR-mediated granule secretion, whereas it negatively regulates CD36/GP4-mediated granule release. Phosphorylates MUC1 in the C-terminal and regulates the interaction between MUC1 and beta-catenin. The catalytic subunit phosphorylates 14-3-3 proteins (YWHAB, YWHAZ and YWHAH) in a sphingosine-dependent fashion. Phosphorylates ELAVL1 in response to angiotensin-2 treatment. Phosphorylates mitochondrial phospholipid scramblase 3 (PLSCR3), resulting in increased cardiolipin expression on the mitochondrial outer membrane which facilitates apoptosis. Phosphorylates SMPD1 which induces SMPD1 secretion. This is Protein kinase C delta type from Mus musculus (Mouse).